Reading from the N-terminus, the 310-residue chain is Olfactory receptor 7A42 (310 aa).

The Extracellular portion of the chain corresponds to 1 to 25; it reads MESGNSTRRIPSFFLLGFSENPHLQ. A glycan (N-linked (GlcNAc...) asparagine) is linked at N5. The helical transmembrane segment at 26–46 threads the bilayer; it reads FLIFVLFLSMYLVTVLGNLLI. The Cytoplasmic segment spans residues 47–67; sequence IMVIITQSPLHTPMYFFLANL. Residues 68–88 form a helical membrane-spanning segment; it reads SFVDICFTSTTVPKMLVNIQT. At 89–100 the chain is on the extracellular side; the sequence is QSKAITYADCIS. C98 and C190 are joined by a disulfide. Residues 101-121 form a helical membrane-spanning segment; the sequence is QMSVFLVFAELDNFLLAVMAY. At 122–135 the chain is on the cytoplasmic side; it reads DRYVAICHPLYYTF. The chain crosses the membrane as a helical span at residues 136–156; sequence IVNQHLCILMVLLSWVVSILH. Over 157-202 the chain is Extracellular; it reads AFLQSSIVLQLTFCGDVKIPHFFCELNQLSQLTCLDSLSSHLIMNL. The helical transmembrane segment at 203-223 threads the bilayer; that stretch reads VPVLLAVISFSSILYSYFKIV. At 224 to 240 the chain is on the cytoplasmic side; the sequence is SSICSISSVQGKYTAFS. Residues 241–261 form a helical membrane-spanning segment; the sequence is TCVSHLSIVFLFYSTGLGVYV. At 262 to 272 the chain is on the extracellular side; that stretch reads SSAVVQSSHSA. Residues 273–293 traverse the membrane as a helical segment; it reads ARASVMYTVVTPMLNPFIYSL. The Cytoplasmic segment spans residues 294-310; sequence RNKDVKKALERLLEGKL.

The protein belongs to the G-protein coupled receptor 1 family.

It localises to the cell membrane. Functionally, odorant receptor. This is Olfactory receptor 7A42 from Mus musculus (Mouse).